A 216-amino-acid chain; its full sequence is Holliday junction branch migration complex subunit RuvA (216 aa).

Positions 1–64 are domain I; sequence MISFIKGVLI…EDAQQLYGFK (64 aa). The domain II stretch occupies residues 65–143; it reads SKVDKKVFQE…KMANEIYAQT (79 aa). The tract at residues 144 to 163 is flexible linker; it reads SGTTTTSQDSQAQQAPTSVV. The domain III stretch occupies residues 164–216; it reads LANSIFNESVDALLALGYKQKDAEKMARSAMGDATTAAEVIRKALQGSIKSKR.

The protein belongs to the RuvA family. In terms of assembly, homotetramer. Forms an RuvA(8)-RuvB(12)-Holliday junction (HJ) complex. HJ DNA is sandwiched between 2 RuvA tetramers; dsDNA enters through RuvA and exits via RuvB. An RuvB hexamer assembles on each DNA strand where it exits the tetramer. Each RuvB hexamer is contacted by two RuvA subunits (via domain III) on 2 adjacent RuvB subunits; this complex drives branch migration. In the full resolvosome a probable DNA-RuvA(4)-RuvB(12)-RuvC(2) complex forms which resolves the HJ.

It is found in the cytoplasm. Its function is as follows. The RuvA-RuvB-RuvC complex processes Holliday junction (HJ) DNA during genetic recombination and DNA repair, while the RuvA-RuvB complex plays an important role in the rescue of blocked DNA replication forks via replication fork reversal (RFR). RuvA specifically binds to HJ cruciform DNA, conferring on it an open structure. The RuvB hexamer acts as an ATP-dependent pump, pulling dsDNA into and through the RuvAB complex. HJ branch migration allows RuvC to scan DNA until it finds its consensus sequence, where it cleaves and resolves the cruciform DNA. The chain is Holliday junction branch migration complex subunit RuvA from Francisella tularensis subsp. mediasiatica (strain FSC147).